The primary structure comprises 342 residues: L-threonine 3-dehydrogenase (342 aa).

Zn(2+) is bound at residue cysteine 38. Catalysis depends on charge relay system residues threonine 40 and histidine 43. Residues histidine 63, glutamate 64, cysteine 93, cysteine 96, cysteine 99, and cysteine 107 each coordinate Zn(2+). NAD(+)-binding positions include isoleucine 175, aspartate 195, arginine 200, 262–264 (LGI), and 286–287 (IY).

This sequence belongs to the zinc-containing alcohol dehydrogenase family. Homotetramer. Zn(2+) serves as cofactor.

Its subcellular location is the cytoplasm. The enzyme catalyses L-threonine + NAD(+) = (2S)-2-amino-3-oxobutanoate + NADH + H(+). It functions in the pathway amino-acid degradation; L-threonine degradation via oxydo-reductase pathway; glycine from L-threonine: step 1/2. Functionally, catalyzes the NAD(+)-dependent oxidation of L-threonine to 2-amino-3-ketobutyrate. This Burkholderia vietnamiensis (strain G4 / LMG 22486) (Burkholderia cepacia (strain R1808)) protein is L-threonine 3-dehydrogenase.